The sequence spans 245 residues: Ureidoacrylate amidohydrolase RutB (245 aa).

The active-site Proton acceptor is the aspartate 41. Lysine 150 is a catalytic residue. The active-site Nucleophile is cysteine 183.

This sequence belongs to the isochorismatase family. RutB subfamily.

It catalyses the reaction (Z)-3-ureidoacrylate + H2O + H(+) = (Z)-3-aminoacrylate + NH4(+) + CO2. The enzyme catalyses (Z)-3-ureidoacrylate + H2O = (Z)-3-aminoacrylate + carbamate + H(+). It carries out the reaction (Z)-2-methylureidoacrylate + H2O + H(+) = (Z)-2-methylaminoacrylate + NH4(+) + CO2. Its function is as follows. Hydrolyzes ureidoacrylate to form aminoacrylate and carbamate. The carbamate hydrolyzes spontaneously, thereby releasing one of the nitrogen atoms of the pyrimidine ring as ammonia and one of its carbon atoms as CO2. This Pseudomonas savastanoi pv. phaseolicola (strain 1448A / Race 6) (Pseudomonas syringae pv. phaseolicola (strain 1448A / Race 6)) protein is Ureidoacrylate amidohydrolase RutB.